A 365-amino-acid polypeptide reads, in one-letter code: Delta(7)-sterol 5(6)-desaturase ERG3 (365 aa).

Topologically, residues 1–92 are cytoplasmic; that stretch reads MDLVLEVADH…LLPRSSILRE (92 aa). A helical transmembrane segment spans residues 93–113; the sequence is FLSLWVIVTIFGLLLYLFTAS. The Lumenal segment spans residues 114 to 140; it reads LSYVFVFDKSIFNHPRYLKNQMAMEIK. The helical transmembrane segment at 141–161 threads the bilayer; sequence LAVSAIPWMSMLTVPWFVMEL. Topologically, residues 162–242 are cytoplasmic; that stretch reads NGHSKLYMKI…VDGFLQSISY (81 aa). A Fatty acid hydroxylase domain is found at 187-311; it reads TFIFFTDCGV…FTTLWDRLGG (125 aa). The short motif at 200–204 is the Histidine box-1 element; the sequence is HRWLH. The short motif at 213–217 is the Histidine box-2 element; sequence HKPHH. The helical transmembrane segment at 243-263 threads the bilayer; that stretch reads HIYPLILPLHKVSYLILFTFV. Residues 264–365 lie on the Lumenal side of the membrane; the sequence is NFWTVMIHDG…ENDPNTKKNN (102 aa). Positions 288–292 match the Histidine box-3 motif; it reads HTVHH. Residues Lys324 and Lys344 each participate in a glycyl lysine isopeptide (Lys-Gly) (interchain with G-Cter in ubiquitin) cross-link.

The protein belongs to the sterol desaturase family. As to quaternary structure, interacts with ERG28. Fe cation is required as a cofactor.

It localises to the endoplasmic reticulum membrane. It catalyses the reaction episterol + 2 Fe(II)-[cytochrome b5] + O2 + 2 H(+) = 5-dehydroepisterol + 2 Fe(III)-[cytochrome b5] + 2 H2O. Its pathway is steroid metabolism; ergosterol biosynthesis; ergosterol from zymosterol: step 3/5. Its function is as follows. C-5 sterol desaturase; part of the third module of ergosterol biosynthesis pathway that includes the late steps of the pathway. ERG3 catalyzes the introduction of a C-5 double bond in the B ring to produce 5-dehydroepisterol. The third module or late pathway involves the ergosterol synthesis itself through consecutive reactions that mainly occur in the endoplasmic reticulum (ER) membrane. Firstly, the squalene synthase ERG9 catalyzes the condensation of 2 farnesyl pyrophosphate moieties to form squalene, which is the precursor of all steroids. Squalene synthase is crucial for balancing the incorporation of farnesyl diphosphate (FPP) into sterol and nonsterol isoprene synthesis. Secondly, the squalene epoxidase ERG1 catalyzes the stereospecific oxidation of squalene to (S)-2,3-epoxysqualene, which is considered to be a rate-limiting enzyme in steroid biosynthesis. Then, the lanosterol synthase ERG7 catalyzes the cyclization of (S)-2,3 oxidosqualene to lanosterol, a reaction that forms the sterol core. In the next steps, lanosterol is transformed to zymosterol through a complex process involving various demethylation, reduction and desaturation reactions. The lanosterol 14-alpha-demethylase ERG11 (also known as CYP51) catalyzes C14-demethylation of lanosterol to produce 4,4'-dimethyl cholesta-8,14,24-triene-3-beta-ol, which is critical for ergosterol biosynthesis. The C-14 reductase ERG24 reduces the C14=C15 double bond of 4,4-dimethyl-cholesta-8,14,24-trienol to produce 4,4-dimethyl-cholesta-8,24-dienol. 4,4-dimethyl-cholesta-8,24-dienol is substrate of the C-4 demethylation complex ERG25-ERG26-ERG27 in which ERG25 catalyzes the three-step monooxygenation required for the demethylation of 4,4-dimethyl and 4alpha-methylsterols, ERG26 catalyzes the oxidative decarboxylation that results in a reduction of the 3-beta-hydroxy group at the C-3 carbon to an oxo group, and ERG27 is responsible for the reduction of the keto group on the C-3. ERG28 has a role as a scaffold to help anchor ERG25, ERG26 and ERG27 to the endoplasmic reticulum and ERG29 regulates the activity of the iron-containing C4-methylsterol oxidase ERG25. Then, the sterol 24-C-methyltransferase ERG6 catalyzes the methyl transfer from S-adenosyl-methionine to the C-24 of zymosterol to form fecosterol. The C-8 sterol isomerase ERG2 catalyzes the reaction which results in unsaturation at C-7 in the B ring of sterols and thus converts fecosterol to episterol. The sterol-C5-desaturase ERG3 then catalyzes the introduction of a C-5 double bond in the B ring to produce 5-dehydroepisterol. The C-22 sterol desaturase ERG5 further converts 5-dehydroepisterol into ergosta-5,7,22,24(28)-tetraen-3beta-ol by forming the C-22(23) double bond in the sterol side chain. Finally, ergosta-5,7,22,24(28)-tetraen-3beta-ol is substrate of the C-24(28) sterol reductase ERG4 to produce ergosterol. The chain is Delta(7)-sterol 5(6)-desaturase ERG3 from Saccharomyces cerevisiae (strain ATCC 204508 / S288c) (Baker's yeast).